Consider the following 344-residue polypeptide: Oxygen sensor histidine kinase NreB (344 aa).

[4Fe-4S] cluster-binding residues include cysteine 58, cysteine 61, cysteine 73, and cysteine 76. Residues 147–344 (ENERKRISRE…GTIITLDIPI (198 aa)) form the Histidine kinase domain. Histidine 158 bears the Phosphohistidine; by autocatalysis mark.

[4Fe-4S] cluster is required as a cofactor. Autophosphorylated.

It is found in the cytoplasm. It catalyses the reaction ATP + protein L-histidine = ADP + protein N-phospho-L-histidine.. Its function is as follows. Member of the two-component regulatory system NreB/NreC involved in the control of dissimilatory nitrate/nitrite reduction in response to oxygen. NreB functions as a direct oxygen sensor histidine kinase which is autophosphorylated, in the absence of oxygen, probably at the conserved histidine residue, and transfers its phosphate group probably to a conserved aspartate residue of NreC. NreB/NreC activates the expression of the nitrate (narGHJI) and nitrite (nir) reductase operons, as well as the putative nitrate transporter gene narT. This Staphylococcus epidermidis (strain ATCC 35984 / DSM 28319 / BCRC 17069 / CCUG 31568 / BM 3577 / RP62A) protein is Oxygen sensor histidine kinase NreB (nreB).